Here is a 311-residue protein sequence, read N- to C-terminus: MSVAAEGRRLLRLEVRNAQTPIERKPPWIKTRARIGPEYTELKNLVRREGLHTVCEEAGCPNIFECWEDREATFLIGGDQCTRRCDFCQIDTGKPAELDRDEPRRVADSVRTMGLRYATVTGVARDDLPDGGAWLYAATVRAIKELNPSTGVELLIPDFNGEPTRLAEVFESGPEVLAHNVETVPRIFKRIRPAFTYRRSLGVLTAARDAGLVTKSNLILGLGETSDEVRTALGDLRDAGCDIVTITQYLRPSARHHPVERWVKPEEFVQFARFAEGLGFAGVLAGPLVRSSYRAGRLYEQARNSRALASR.

C55, C60, C66, C81, C85, C88, and S292 together coordinate [4Fe-4S] cluster. Residues 67–281 enclose the Radical SAM core domain; sequence WEDREATFLI…ARFAEGLGFA (215 aa).

The protein belongs to the radical SAM superfamily. Lipoyl synthase family. The cofactor is [4Fe-4S] cluster.

Its subcellular location is the cytoplasm. It catalyses the reaction [[Fe-S] cluster scaffold protein carrying a second [4Fe-4S](2+) cluster] + N(6)-octanoyl-L-lysyl-[protein] + 2 oxidized [2Fe-2S]-[ferredoxin] + 2 S-adenosyl-L-methionine + 4 H(+) = [[Fe-S] cluster scaffold protein] + N(6)-[(R)-dihydrolipoyl]-L-lysyl-[protein] + 4 Fe(3+) + 2 hydrogen sulfide + 2 5'-deoxyadenosine + 2 L-methionine + 2 reduced [2Fe-2S]-[ferredoxin]. Its pathway is protein modification; protein lipoylation via endogenous pathway; protein N(6)-(lipoyl)lysine from octanoyl-[acyl-carrier-protein]: step 2/2. Its function is as follows. Catalyzes the radical-mediated insertion of two sulfur atoms into the C-6 and C-8 positions of the octanoyl moiety bound to the lipoyl domains of lipoate-dependent enzymes, thereby converting the octanoylated domains into lipoylated derivatives. The sequence is that of Lipoyl synthase from Mycobacterium bovis (strain ATCC BAA-935 / AF2122/97).